The chain runs to 115 residues: uncharacterized protein (115 aa).

Helical transmembrane passes span 15-35 and 52-72; these read FSTQVVCSPSGAALFCFEVLF and FDGVAILLLLILLSLSNYYSI.

The protein localises to the membrane. This is an uncharacterized protein from Saccharomyces cerevisiae (strain ATCC 204508 / S288c) (Baker's yeast).